Consider the following 379-residue polypeptide: Chaperone protein DnaJ (379 aa).

One can recognise a J domain in the interval 5–70; the sequence is DFYEVLGVSR…QKRSAYDQYG (66 aa). The CR-type zinc finger occupies 134 to 212; the sequence is GCDKEIEVPT…CHGEGRVHKT (79 aa). Zn(2+) is bound by residues cysteine 147, cysteine 150, cysteine 164, cysteine 167, cysteine 186, cysteine 189, cysteine 200, and cysteine 203. CXXCXGXG motif repeat units lie at residues 147–154, 164–171, 186–193, and 200–207; these read CDPCEGTG, CSTCHGQG, CPTCHGKG, and CNSCHGEG.

The protein belongs to the DnaJ family. Homodimer. The cofactor is Zn(2+).

It localises to the cytoplasm. Its function is as follows. Participates actively in the response to hyperosmotic and heat shock by preventing the aggregation of stress-denatured proteins and by disaggregating proteins, also in an autonomous, DnaK-independent fashion. Unfolded proteins bind initially to DnaJ; upon interaction with the DnaJ-bound protein, DnaK hydrolyzes its bound ATP, resulting in the formation of a stable complex. GrpE releases ADP from DnaK; ATP binding to DnaK triggers the release of the substrate protein, thus completing the reaction cycle. Several rounds of ATP-dependent interactions between DnaJ, DnaK and GrpE are required for fully efficient folding. Also involved, together with DnaK and GrpE, in the DNA replication of plasmids through activation of initiation proteins. This chain is Chaperone protein DnaJ, found in Aliivibrio fischeri (strain ATCC 700601 / ES114) (Vibrio fischeri).